Reading from the N-terminus, the 591-residue chain is V-type ATP synthase alpha chain (591 aa).

Residue 233–240 (GPFGAGKT) coordinates ATP.

This sequence belongs to the ATPase alpha/beta chains family.

The catalysed reaction is ATP + H2O + 4 H(+)(in) = ADP + phosphate + 5 H(+)(out). Produces ATP from ADP in the presence of a proton gradient across the membrane. The V-type alpha chain is a catalytic subunit. In Streptococcus pyogenes serotype M18 (strain MGAS8232), this protein is V-type ATP synthase alpha chain.